The sequence spans 1141 residues: Envelopment polyprotein (1141 aa).

An N-terminal signal peptide occupies residues 1 to 19 (MFCLCLSLLGLLLCWPAAT). Topologically, residues 20–489 (RNLLELKVEC…CVPGLHGWAT (470 aa)) are lumenal. 6 disulfide bridges follow: Cys-29–Cys-154, Cys-63–Cys-160, Cys-112–Cys-131, Cys-136–Cys-141, Cys-178–Cys-188, and Cys-213–Cys-252. N-linked (GlcNAc...) asparagine; by host glycosylation is present at Asn-137. The N-linked (GlcNAc...) asparagine; by host glycan is linked to Asn-352. 4 cysteine pairs are disulfide-bonded: Cys-381-Cys-440, Cys-385-Cys-394, Cys-410-Cys-429, and Cys-457-Cys-480. An N-linked (GlcNAc...) asparagine; by host glycan is attached at Asn-404. A helical transmembrane segment spans residues 490–510 (ISLLITFCFGWLAIPLLSMII). The Cytoplasmic portion of the chain corresponds to 511–632 (IRFLLIFTYL…LSMFRYKSKC (122 aa)). Positions 521-538 (CSKYSTDSKFKLIIEKVK) are binding to the ribonucleoprotein. CCHC-type zinc fingers lie at residues 550-570 (CEVC…KKSC) and 575-596 (CPYC…FKVC). 3 binding to the ribonucleoprotein regions span residues 593-610 (FKVC…KKSL), 597-608 (KLTTRFQENLKK), and 616-630 (KRGL…RYKS). The interval 612-653 (TYEPKRGLYRTLSMFRYKSKCYVGLVWCILLTMELIVWAASA) is inhibition of interferon induction. In terms of domain architecture, ITAM spans 616-639 (KRGLYRTLSMFRYKSKCYVGLVWC). Tyr-620 and Tyr-633 each carry phosphotyrosine. A YxxL motif is present at residues 620-623 (YRTL). Residues 633 to 653 (YVGLVWCILLTMELIVWAASA) traverse the membrane as a helical segment. Topologically, residues 654–1109 (ETINLEPGWT…EWLLGILSGN (456 aa)) are lumenal. Cystine bridges form between Cys-740–Cys-775, Cys-744–Cys-782, Cys-756–Cys-889, Cys-770–Cys-900, Cys-785–Cys-908, Cys-811–Cys-820, Cys-828–Cys-837, and Cys-868–Cys-872. The tract at residues 762–782 (FEFETGWGCNPPDCPGVGTGC) is fusion loop. An N-linked (GlcNAc...) asparagine; by host glycan is attached at Asn-932. 5 disulfide bridges follow: Cys-974-Cys-1004, Cys-997-Cys-1049, Cys-1014-Cys-1019, Cys-1050-Cys-1055, and Cys-1089-Cys-1093. Residues 1110–1130 (WMVVAVLIALFIFSLLLFSLC) form a helical membrane-spanning segment. A binding to the ribonucleoprotein region spans residues 1126–1141 (LFSLCCPRRQNYKKNK). Residues 1131-1141 (CPRRQNYKKNK) lie on the Cytoplasmic side of the membrane.

The protein belongs to the hantavirus envelope glycoprotein family. Homodimer. Homotetramer; forms heterotetrameric Gn-Gc spikes in the pre-fusion conformation. Interacts (via C-terminus) with the nucleoprotein. Interacts with host TUFM; this interaction contributes to the virus-induced degradation of mitochondria by autophagy, which leads to degradation of host MAVS and inhibition of type I interferon (IFN) responses. Interacts with host MAP1LC3B; this interaction contributes to the virus-induced degradation of mitochondria by autophagy, which leads to degradation of host MAVS and inhibition of type I interferon (IFN) responses. In terms of assembly, homodimer. Homotetramer; forms heterotetrameric Gn-Gc spikes in the pre-fusion conformation. Homotrimer; forms homotrimer in the post-fusion conformation at acidic pH. Interacts (via C-terminus) with the nucleoprotein. Post-translationally, envelope polyprotein precursor is quickly cleaved in vivo just after synthesis, presumably by host signal peptidase.

It is found in the virion membrane. Its subcellular location is the host cell surface. It localises to the host Golgi apparatus membrane. The protein localises to the host endoplasmic reticulum membrane. The protein resides in the host mitochondrion. Functionally, forms homotetramers with glycoprotein C at the surface of the virion. Attaches the virion to host cell receptors including integrin alpha5/ITGB1. This attachment induces virion internalization predominantly through clathrin-dependent endocytosis. Mediates the assembly and budding of infectious virus particles through its interaction with the nucleocapsid protein and the viral genome. May dysregulate normal immune and endothelial cell responses through an ITAM motif. Translocates to mitochondria, binds to host TUFM and recruits MAP1LC3B. These interactions induce mitochondrial autophagy and therefore destruction of host MAVS leading to inhibition of type I interferon (IFN) responses. Concomitant breakdown of glycoprotein N is apparently prevented by the nucleoprotein that may inhibit Gn-stimulated autophagosome-lysosome fusion. Interacts with the viral genomic RNA. Inhibits the host RIG-I/TBK1 pathway by disrupting the formation of TBK1-TRAF3 complexes and downstream signaling responses required for IFN-beta transcription. Forms homotetramers with glycoprotein N at the surface of the virion. Attaches the virion to host cell receptors including integrin ITGAV/ITGB3. This attachment induces virion internalization predominantly through clathrin-dependent endocytosis. Class II fusion protein that promotes fusion of viral membrane with host endosomal membrane after endocytosis of the virion. This Tula orthohantavirus (TULV) protein is Envelopment polyprotein (GP).